Consider the following 222-residue polypeptide: Recombination protein RecR (222 aa).

The C4-type zinc-finger motif lies at Cys-57–Cys-72. Residues Ser-80–Pro-173 enclose the Toprim domain. A disordered region spans residues Ala-189–His-222.

The protein belongs to the RecR family.

Functionally, may play a role in DNA repair. It seems to be involved in an RecBC-independent recombinational process of DNA repair. It may act with RecF and RecO. This chain is Recombination protein RecR, found in Deinococcus geothermalis (strain DSM 11300 / CIP 105573 / AG-3a).